The following is an 811-amino-acid chain: Lon protease 1 (811 aa).

One can recognise a Lon N-terminal domain in the interval leucine 15–isoleucine 212. Position 376-383 (glycine 376–threonine 383) interacts with ATP. The Lon proteolytic domain maps to tyrosine 613–leucine 794. Catalysis depends on residues serine 700 and lysine 743.

Belongs to the peptidase S16 family. Homohexamer. Organized in a ring with a central cavity.

It is found in the cytoplasm. The catalysed reaction is Hydrolysis of proteins in presence of ATP.. Its function is as follows. ATP-dependent serine protease that mediates the selective degradation of mutant and abnormal proteins as well as certain short-lived regulatory proteins. Required for cellular homeostasis and for survival from DNA damage and developmental changes induced by stress. Degrades polypeptides processively to yield small peptide fragments that are 5 to 10 amino acids long. Binds to DNA in a double-stranded, site-specific manner. The polypeptide is Lon protease 1 (Sorangium cellulosum (strain So ce56) (Polyangium cellulosum (strain So ce56))).